The following is a 417-amino-acid chain: Calreticulin (417 aa).

A signal peptide spans Met1–Ala17. The N-domain stretch occupies residues Asp18 to Glu197. Gln26 contributes to the Ca(2+) binding site. Lys48 bears the N6-acetyllysine mark. Ca(2+) contacts are provided by Lys62 and Lys64. The residue at position 64 (Lys64) is an N6-(2-hydroxyisobutyryl)lysine. 4 residues coordinate an alpha-D-glucoside: Tyr109, Lys111, Tyr128, and Asp135. A disulfide bridge connects residues Cys137 and Cys163. Residue Lys159 is modified to N6-acetyllysine. Asn179 carries an N-linked (GlcNAc...) asparagine glycan. One copy of the 1-1 repeat lies at Val191–Phe202. The segment at Val191–Glu255 is 4 X approximate repeats. Positions Ser193–Glu270 are disordered. The interval Asp198–Tyr308 is P-domain. A compositionally biased stretch (basic and acidic residues) spans Lys207–Glu251. The residue at position 209 (Lys209) is an N6-acetyllysine. 6 consecutive repeat copies span residues Asp210–Asp221, Asp227–Lys238, Asp244–Glu255, Gly259–Pro269, Gly273–Pro283, and Gly287–Pro297. The interval Asp237–Glu270 is interaction with PPIB. The segment covering Asp252–Trp261 has biased composition (acidic residues). Residues Gly259–Pro297 form a 3 X approximate repeats region. The segment at Glu309–Leu417 is C-domain. An an alpha-D-glucoside-binding site is contributed by Asp317. A Ca(2+)-binding site is contributed by Asp328. The disordered stretch occupies residues Thr350–Leu417. The span at Ala352–Glu378 shows a compositional bias: basic and acidic residues. Acidic residues predominate over residues Glu379 to Ala408. Positions Lys414–Leu417 match the Prevents secretion from ER motif.

The protein belongs to the calreticulin family. In terms of assembly, monomer. Component of an EIF2 complex at least composed of CELF1/CUGBP1, CALR, CALR3, EIF2S1, EIF2S2, HSP90B1 and HSPA5. Interacts with PDIA3/ERp57 and SPACA9. Interacts with TRIM21. Interacts with NR3C1. Interacts with PPIB. Interacts (via P-domain) with PDIA5. Interacts with GABARAP. Interacts with CLCC1.

The protein resides in the endoplasmic reticulum lumen. It localises to the cytoplasm. It is found in the cytosol. The protein localises to the secreted. Its subcellular location is the extracellular space. The protein resides in the extracellular matrix. It localises to the cell surface. It is found in the sarcoplasmic reticulum lumen. The protein localises to the cytoplasmic vesicle. Its subcellular location is the secretory vesicle. The protein resides in the cortical granule. It localises to the cytolytic granule. Functionally, calcium-binding chaperone that promotes folding, oligomeric assembly and quality control in the endoplasmic reticulum (ER) via the calreticulin/calnexin cycle. This lectin interacts transiently with almost all of the monoglucosylated glycoproteins that are synthesized in the ER. Interacts with the DNA-binding domain of NR3C1 and mediates its nuclear export. Involved in maternal gene expression regulation. May participate in oocyte maturation via the regulation of calcium homeostasis. Present in the cortical granules of non-activated oocytes, is exocytosed during the cortical reaction in response to oocyte activation and might participate in the block to polyspermy. The protein is Calreticulin (CALR) of Bos taurus (Bovine).